The sequence spans 117 residues: Replication initiation control protein YabA (117 aa).

Zn(2+) is bound by residues histidine 87, cysteine 89, cysteine 103, and cysteine 106.

It belongs to the YabA family. In terms of assembly, homotetramer. Interacts with both DnaA and DnaN, acting as a bridge between these two proteins. Zn(2+) is required as a cofactor.

The protein resides in the cytoplasm. Its subcellular location is the nucleoid. In terms of biological role, involved in control of chromosome replication initiation. Inhibits the cooperative binding of DnaA to the oriC region, thus negatively regulating initiation of chromosome replication. Inhibits the ability of DnaA-ATP to form a helix on DNA; does not disassemble preformed DnaA-DNA helices. Decreases the residence time of DnaA on the chromosome at its binding sites (oriC, replication forks and promoter-binding sites). Tethers DnaA to the replication machinery via the DNA polymerase beta sliding clamp subunit (dnaN). Associates with oriC and other DnaA targets on the chromosome in a DnaA-dependent manner. The chain is Replication initiation control protein YabA from Latilactobacillus sakei subsp. sakei (strain 23K) (Lactobacillus sakei subsp. sakei).